The chain runs to 320 residues: Ferrochelatase (320 aa).

Residues H194 and E275 each coordinate Fe cation.

It belongs to the ferrochelatase family. In terms of assembly, monomer.

Its subcellular location is the cytoplasm. The enzyme catalyses heme b + 2 H(+) = protoporphyrin IX + Fe(2+). Its pathway is porphyrin-containing compound metabolism; protoheme biosynthesis; protoheme from protoporphyrin-IX: step 1/1. Its function is as follows. Catalyzes the ferrous insertion into protoporphyrin IX. This Escherichia coli O157:H7 (strain EC4115 / EHEC) protein is Ferrochelatase.